The following is a 316-amino-acid chain: tRNA dimethylallyltransferase (316 aa).

17–24 (GPTASGKT) lines the ATP pocket. 19–24 (TASGKT) is a substrate binding site. Interaction with substrate tRNA stretches follow at residues 42 to 45 (DSAL), 166 to 170 (QRLSR), 247 to 252 (RCVGYR), and 280 to 287 (KRQITWLR).

This sequence belongs to the IPP transferase family. Monomer. It depends on Mg(2+) as a cofactor.

The enzyme catalyses adenosine(37) in tRNA + dimethylallyl diphosphate = N(6)-dimethylallyladenosine(37) in tRNA + diphosphate. Functionally, catalyzes the transfer of a dimethylallyl group onto the adenine at position 37 in tRNAs that read codons beginning with uridine, leading to the formation of N6-(dimethylallyl)adenosine (i(6)A). In Enterobacter sp. (strain 638), this protein is tRNA dimethylallyltransferase.